Here is a 91-residue protein sequence, read N- to C-terminus: C-C motif chemokine 5 (91 aa).

Residues 1 to 23 (MKVSAAALCVILTTAALCVPASA) form the signal peptide. Disulfide bonds link C33-C57 and C34-C73.

The protein belongs to the intercrine beta (chemokine CC) family.

Its subcellular location is the secreted. Functionally, chemoattractant for blood monocytes, memory T-helper cells and eosinophils. Causes the release of histamine from basophils and activates eosinophils. May activate several chemokine receptors including CCR1, CCR3, CCR4 and CCR5. May also be an agonist of the G protein-coupled receptor GPR75. Together with GPR75, may play a role in neuron survival through activation of a downstream signaling pathway involving the PI3, Akt and MAP kinases. By activating GPR75 may also play a role in insulin secretion by islet cells. This chain is C-C motif chemokine 5 (CCL5), found in Cavia porcellus (Guinea pig).